Consider the following 248-residue polypeptide: Probable transcriptional regulatory protein FTW_1073 (248 aa).

Belongs to the TACO1 family.

It is found in the cytoplasm. The polypeptide is Probable transcriptional regulatory protein FTW_1073 (Francisella tularensis subsp. tularensis (strain WY96-3418)).